The following is a 320-amino-acid chain: Acetyl-coenzyme A carboxylase carboxyl transferase subunit alpha (320 aa).

The 262-residue stretch at 33–294 folds into the CoA carboxyltransferase C-terminal domain; that stretch reads AFDTEIQALR…GDAVEDELKA (262 aa).

Belongs to the AccA family. Acetyl-CoA carboxylase is a heterohexamer composed of biotin carboxyl carrier protein (AccB), biotin carboxylase (AccC) and two subunits each of ACCase subunit alpha (AccA) and ACCase subunit beta (AccD).

The protein resides in the cytoplasm. It carries out the reaction N(6)-carboxybiotinyl-L-lysyl-[protein] + acetyl-CoA = N(6)-biotinyl-L-lysyl-[protein] + malonyl-CoA. Its pathway is lipid metabolism; malonyl-CoA biosynthesis; malonyl-CoA from acetyl-CoA: step 1/1. Its function is as follows. Component of the acetyl coenzyme A carboxylase (ACC) complex. First, biotin carboxylase catalyzes the carboxylation of biotin on its carrier protein (BCCP) and then the CO(2) group is transferred by the carboxyltransferase to acetyl-CoA to form malonyl-CoA. This chain is Acetyl-coenzyme A carboxylase carboxyl transferase subunit alpha, found in Caulobacter vibrioides (strain ATCC 19089 / CIP 103742 / CB 15) (Caulobacter crescentus).